Here is a 531-residue protein sequence, read N- to C-terminus: Inactive beta-amylase 4, chloroplastic (531 aa).

Residues 1–62 (MTETGVIGCG…KRGRFITKLR (62 aa)) constitute a chloroplast transit peptide.

This sequence belongs to the glycosyl hydrolase 14 family. Preferentially expressed in vascular tissue of cotyledons, leaves, petioles, stems, petals, siliques and roots, particularly in phloem. Also present in root tip.

The protein localises to the plastid. It localises to the chloroplast. In terms of biological role, no alpha-1,4-glucan hydrolase activity, including beta-amylase, alpha-amylase, a-glucosidase or alpha-amyloglucosidase. However, facilitates or regulates starch breakdown, especially at night, by a mechanism involving direct interaction with starch or other alpha-1,4-glucan. The polypeptide is Inactive beta-amylase 4, chloroplastic (BAM4) (Arabidopsis thaliana (Mouse-ear cress)).